The sequence spans 201 residues: Small ribosomal subunit protein uS4 (201 aa).

A disordered region spans residues 1-42 (MARYTGPATRKSRRLGVDLVGGDQSFEKRPYPPGQHGRARIK). One can recognise an S4 RNA-binding domain in the interval 91 to 157 (SRLDNVVYRA…LPFQIARETA (67 aa)).

This sequence belongs to the universal ribosomal protein uS4 family. In terms of assembly, part of the 30S ribosomal subunit. Contacts protein S5. The interaction surface between S4 and S5 is involved in control of translational fidelity.

One of the primary rRNA binding proteins, it binds directly to 16S rRNA where it nucleates assembly of the body of the 30S subunit. In terms of biological role, with S5 and S12 plays an important role in translational accuracy. The polypeptide is Small ribosomal subunit protein uS4 (Mycolicibacterium smegmatis (strain ATCC 700084 / mc(2)155) (Mycobacterium smegmatis)).